The primary structure comprises 275 residues: Large ribosomal subunit protein uL2 (275 aa).

The interval 223–275 (GVVMNPVDHPHGGGEGRGKGHHPQSPWGVPAKGYKTRRGKRASDKFIVRRRNG) is disordered. Positions 230 to 240 (DHPHGGGEGRG) are enriched in basic and acidic residues.

Belongs to the universal ribosomal protein uL2 family. Part of the 50S ribosomal subunit. Forms a bridge to the 30S subunit in the 70S ribosome.

Functionally, one of the primary rRNA binding proteins. Required for association of the 30S and 50S subunits to form the 70S ribosome, for tRNA binding and peptide bond formation. It has been suggested to have peptidyltransferase activity; this is somewhat controversial. Makes several contacts with the 16S rRNA in the 70S ribosome. The sequence is that of Large ribosomal subunit protein uL2 from Fervidobacterium nodosum (strain ATCC 35602 / DSM 5306 / Rt17-B1).